The sequence spans 104 residues: Type VII secretion system extracellular protein B (104 aa).

This sequence belongs to the WXG100 family. Homodimer. When mixed with EsxA does not form heterodimers.

It is found in the secreted. Virulence factor that is important for the establishment of infection in the host. EsxB is required for EsxA synthesis as well as secretion. Mediates together with EsxA the release of S.aureus from the host cell. Also inhibits host cytokine production and thus modulates dendritic cell-mediated immunity. The protein is Type VII secretion system extracellular protein B of Staphylococcus aureus (strain MSSA476).